The primary structure comprises 576 residues: Arginine--tRNA ligase (576 aa).

The short motif at 126–136 is the 'HIGH' region element; that stretch reads ANPTGPMHIGH.

The protein belongs to the class-I aminoacyl-tRNA synthetase family. Monomer.

Its subcellular location is the cytoplasm. It carries out the reaction tRNA(Arg) + L-arginine + ATP = L-arginyl-tRNA(Arg) + AMP + diphosphate. This Rickettsia peacockii (strain Rustic) protein is Arginine--tRNA ligase.